The sequence spans 149 residues: Large ribosomal subunit protein uL15 (149 aa).

The tract at residues 1–52 (MSELLKLHHLRPAPGSNKAKIRKGRGEASKGKTAGRGTKGTKARSTVPAGFE) is disordered.

The protein belongs to the universal ribosomal protein uL15 family. As to quaternary structure, part of the 50S ribosomal subunit.

Binds to the 23S rRNA. This is Large ribosomal subunit protein uL15 from Thermobifida fusca (strain YX).